The primary structure comprises 380 residues: E3 ubiquitin-protein ligase RNF13 (380 aa).

The first 34 residues, Met1–Ala34, serve as a signal peptide directing secretion. Over Asp35–Tyr182 the chain is Lumenal. The region spanning Lys65–Asp160 is the PA domain. A glycan (N-linked (GlcNAc...) asparagine) is linked at Asn88. A helical membrane pass occupies residues Tyr183 to Ile203. The Cytoplasmic portion of the chain corresponds to Thr204–Val380. The RING-type; atypical zinc-finger motif lies at Cys240–Lys282. The disordered stretch occupies residues Val285–Val380. Acidic residues-rich tracts occupy residues Ser292–Glu304 and Ser339–Glu356.

Interacts with ERN1. Autoubiquitinated.

It localises to the endoplasmic reticulum membrane. The protein localises to the late endosome membrane. It is found in the lysosome membrane. Its subcellular location is the nucleus inner membrane. It catalyses the reaction S-ubiquitinyl-[E2 ubiquitin-conjugating enzyme]-L-cysteine + [acceptor protein]-L-lysine = [E2 ubiquitin-conjugating enzyme]-L-cysteine + N(6)-ubiquitinyl-[acceptor protein]-L-lysine.. It participates in protein modification; protein ubiquitination. Functionally, E3 ubiquitin-protein ligase that regulates cell proliferation. Involved in apoptosis regulation. Mediates ER stress-induced activation of JNK signaling pathway and apoptosis by promoting ERN1 activation and splicing of XBP1 mRNA. Also involved in protein trafficking and localization. The chain is E3 ubiquitin-protein ligase RNF13 (RNF13) from Bos taurus (Bovine).